Here is a 295-residue protein sequence, read N- to C-terminus: NAD kinase (295 aa).

The active-site Proton acceptor is the aspartate 72. Residues 72–73, 146–147, arginine 157, lysine 174, aspartate 176, 187–192, and glutamine 247 contribute to the NAD(+) site; these read DG, ND, and TAYALS.

Belongs to the NAD kinase family. A divalent metal cation serves as cofactor.

It is found in the cytoplasm. The catalysed reaction is NAD(+) + ATP = ADP + NADP(+) + H(+). Involved in the regulation of the intracellular balance of NAD and NADP, and is a key enzyme in the biosynthesis of NADP. Catalyzes specifically the phosphorylation on 2'-hydroxyl of the adenosine moiety of NAD to yield NADP. The protein is NAD kinase of Ectopseudomonas mendocina (strain ymp) (Pseudomonas mendocina).